Reading from the N-terminus, the 668-residue chain is uncharacterized protein (668 aa).

Helical transmembrane passes span 182 to 202 (FAFA…GILG), 208 to 228 (PYSY…IQFW), 286 to 306 (VPLF…AFIV), 321 to 341 (IVSL…TFIY), 379 to 399 (ALFL…PHYI), 430 to 450 (IYFL…VPQL), 499 to 519 (FVLM…APIF), 557 to 577 (LSLL…FYSS), and 587 to 607 (VIAA…RMFI).

The protein localises to the membrane. This is an uncharacterized protein from Schizosaccharomyces pombe (strain 972 / ATCC 24843) (Fission yeast).